A 456-amino-acid chain; its full sequence is CBL-interacting protein kinase 9 (456 aa).

Residues 27-282 (YELGKTIGEG…IAQILEDDWF (256 aa)) enclose the Protein kinase domain. ATP-binding positions include 33–41 (IGEGSFAKV) and K56. D150 acts as the Proton acceptor in catalysis. The segment at 168 to 197 (DFGLSAFAPQTKEDGLLHTACGTPNYVAPE) is activation loop. An NAF domain is found at 318–343 (REKPESMNAFALISRSQGFNLGNLFE). A PPI region spans residues 351–380 (KRETSFTSQCTPQEIMSKIEEACGPLGFNV).

The protein belongs to the protein kinase superfamily. CAMK Ser/Thr protein kinase family. SNF1 subfamily. The cofactor is Mn(2+).

The enzyme catalyses L-seryl-[protein] + ATP = O-phospho-L-seryl-[protein] + ADP + H(+). The catalysed reaction is L-threonyl-[protein] + ATP = O-phospho-L-threonyl-[protein] + ADP + H(+). In terms of biological role, CIPK serine-threonine protein kinases interact with CBL proteins. Binding of a CBL protein to the regulatory NAF domain of CIPK protein lead to the activation of the kinase in a calcium-dependent manner. The polypeptide is CBL-interacting protein kinase 9 (CIPK9) (Oryza sativa subsp. japonica (Rice)).